A 372-amino-acid chain; its full sequence is N-methyl-L-tryptophan oxidase (372 aa).

Residue D4–H34 coordinates FAD. C307 is subject to S-8alpha-FAD cysteine.

It belongs to the MSOX/MTOX family. MTOX subfamily. Monomer. The cofactor is FAD.

It catalyses the reaction N(alpha)-methyl-L-tryptophan + O2 + H2O = L-tryptophan + formaldehyde + H2O2. Catalyzes the oxidative demethylation of N-methyl-L-tryptophan. The chain is N-methyl-L-tryptophan oxidase from Salmonella arizonae (strain ATCC BAA-731 / CDC346-86 / RSK2980).